We begin with the raw amino-acid sequence, 382 residues long: Protein MSN1 (382 aa).

The interval 12–26 is leucine-zipper; it reads LNENEAILTNRVAEL. Composition is skewed to polar residues over residues 104–114 and 122–138; these read TLDPQGFTDGT and NYTSVPMNNDQTAHPQN. Disordered regions lie at residues 104–138 and 155–260; these read TLDPQGFTDGTTAPGAPRNYTSVPMNNDQTAHPQN and NSQE…EEEQ. The span at 162 to 180 shows a compositional bias: low complexity; that stretch reads SQQQTNSSNSISQENNSTN. 2 stretches are compositionally biased toward polar residues: residues 181-198 and 207-221; these read PSVDTRFNKPQNYNSNLV and NPPNNDGGQSQGLYI. Low complexity predominate over residues 222–231; it reads SSNSSQSRQS. Positions 232 to 253 are enriched in polar residues; the sequence is PNLQKVSPNHENAVESNAQESV. The short motif at 266 to 271 is the Nuclear localization signal element; the sequence is GLKRKR.

It is found in the nucleus. Functionally, may function as a transcriptional activator. Increased dosage of MSN1 restores invertase expression in yeast mutants defective in the SNF1 protein kinase, and msn1 disruption reduced derepression of invertase in the wild-type. May affect SUC2 expression. Expression of MSN1 enhances growth in iron-limiting conditions. The sequence is that of Protein MSN1 (MSN1) from Saccharomyces cerevisiae (strain ATCC 204508 / S288c) (Baker's yeast).